The primary structure comprises 303 residues: Glutathione transport system permease protein GsiD (303 aa).

6 consecutive transmembrane segments (helical) span residues Ala40–Ile60, Leu105–Leu125, Leu144–Ile164, Ala165–Gly185, Ile222–Phe242, and Val266–Phe286. The 190-residue stretch at Ala101–Gly290 folds into the ABC transmembrane type-1 domain.

This sequence belongs to the binding-protein-dependent transport system permease family. In terms of assembly, the complex is composed of two ATP-binding proteins (GsiA), two transmembrane proteins (GsiC and GsiD) and a solute-binding protein (GsiB).

Its subcellular location is the cell inner membrane. In terms of biological role, part of the ABC transporter complex GsiABCD involved in glutathione import. Probably responsible for the translocation of the substrate across the membrane. This is Glutathione transport system permease protein GsiD from Escherichia coli O157:H7.